We begin with the raw amino-acid sequence, 329 residues long: Glycerol-3-phosphate dehydrogenase [NAD(P)+] (329 aa).

Residues W11, R31, and K105 each contribute to the NADPH site. Residues K105, G135, and T137 each coordinate sn-glycerol 3-phosphate. A139 contributes to the NADPH binding site. Residues K190, D243, S253, R254, and N255 each coordinate sn-glycerol 3-phosphate. K190 functions as the Proton acceptor in the catalytic mechanism. R254 serves as a coordination point for NADPH. Positions 277 and 279 each coordinate NADPH.

The protein belongs to the NAD-dependent glycerol-3-phosphate dehydrogenase family.

It is found in the cytoplasm. The catalysed reaction is sn-glycerol 3-phosphate + NAD(+) = dihydroxyacetone phosphate + NADH + H(+). It catalyses the reaction sn-glycerol 3-phosphate + NADP(+) = dihydroxyacetone phosphate + NADPH + H(+). Its pathway is membrane lipid metabolism; glycerophospholipid metabolism. In terms of biological role, catalyzes the reduction of the glycolytic intermediate dihydroxyacetone phosphate (DHAP) to sn-glycerol 3-phosphate (G3P), the key precursor for phospholipid synthesis. The chain is Glycerol-3-phosphate dehydrogenase [NAD(P)+] from Maridesulfovibrio salexigens (strain ATCC 14822 / DSM 2638 / NCIMB 8403 / VKM B-1763) (Desulfovibrio salexigens).